The primary structure comprises 502 residues: Type II methyltransferase M.HincII (502 aa).

It belongs to the N(4)/N(6)-methyltransferase family.

It catalyses the reaction a 2'-deoxyadenosine in DNA + S-adenosyl-L-methionine = an N(6)-methyl-2'-deoxyadenosine in DNA + S-adenosyl-L-homocysteine + H(+). Functionally, a gamma subtype methylase that recognizes the double-stranded sequence 5'-GTYRAC-3', methylates A-5 on both strands, and protects the DNA from cleavage by the HincII endonuclease. The sequence is that of Type II methyltransferase M.HincII from Haemophilus influenzae.